Consider the following 622-residue polypeptide: Probable potassium transport system protein Kup 1 (622 aa).

12 consecutive transmembrane segments (helical) span residues 7–27 (LLVL…TSPL), 50–70 (LISL…VLFL), 96–116 (TAIL…DAMI), 132–152 (VTPA…LLLF), 165–185 (FFGP…FVHI), 210–230 (VGIV…ALYA), 244–264 (WFTV…AFVL), 282–302 (ALLP…QAVI), 334–354 (IYLP…VFLF), 360–380 (LATA…VLSF), 391–411 (TWWA…FLGA), and 416–436 (IHDG…IMWT).

Belongs to the HAK/KUP transporter (TC 2.A.72) family.

The protein localises to the cell inner membrane. It catalyses the reaction K(+)(in) + H(+)(in) = K(+)(out) + H(+)(out). Its function is as follows. Transport of potassium into the cell. Likely operates as a K(+):H(+) symporter. In Rhizobium meliloti (strain 1021) (Ensifer meliloti), this protein is Probable potassium transport system protein Kup 1.